The sequence spans 197 residues: Nucleoid occlusion factor SlmA (197 aa).

One can recognise an HTH tetR-type domain in the interval 7-67 (INRREHILQC…GLIDFIEESL (61 aa)). The segment at residues 30–49 (TTAKLAAEVGVSEAALYRHF) is a DNA-binding region (H-T-H motif).

It belongs to the nucleoid occlusion factor SlmA family. Homodimer. Interacts with FtsZ.

The protein resides in the cytoplasm. It is found in the nucleoid. Functionally, required for nucleoid occlusion (NO) phenomenon, which prevents Z-ring formation and cell division over the nucleoid. Acts as a DNA-associated cell division inhibitor that binds simultaneously chromosomal DNA and FtsZ, and disrupts the assembly of FtsZ polymers. SlmA-DNA-binding sequences (SBS) are dispersed on non-Ter regions of the chromosome, preventing FtsZ polymerization at these regions. The protein is Nucleoid occlusion factor SlmA of Shewanella sediminis (strain HAW-EB3).